The following is a 202-amino-acid chain: Orotate phosphoribosyltransferase (202 aa).

Residues K93 and 113–121 each bind 5-phospho-alpha-D-ribose 1-diphosphate; that span reads EDIITTGGS. T117 and R145 together coordinate orotate.

Belongs to the purine/pyrimidine phosphoribosyltransferase family. PyrE subfamily. In terms of assembly, homodimer. Mg(2+) serves as cofactor.

The enzyme catalyses orotidine 5'-phosphate + diphosphate = orotate + 5-phospho-alpha-D-ribose 1-diphosphate. The protein operates within pyrimidine metabolism; UMP biosynthesis via de novo pathway; UMP from orotate: step 1/2. Functionally, catalyzes the transfer of a ribosyl phosphate group from 5-phosphoribose 1-diphosphate to orotate, leading to the formation of orotidine monophosphate (OMP). The sequence is that of Orotate phosphoribosyltransferase from Campylobacter jejuni subsp. doylei (strain ATCC BAA-1458 / RM4099 / 269.97).